The primary structure comprises 227 residues: A-type potassium channel modulatory protein KCNIP1 (227 aa).

Residues 38–94 (LEMTMVCHRPEGLEQLEAQTNFTKRELQVLYRGFKNECPSGVVNEETFKQIYAQFFP) form the EF-hand 1; degenerate domain. EF-hand domains are found at residues 97–132 (DAST…LLRG), 133–168 (TVHE…IYDM), and 181–216 (TPRQ…DDNI). Ca(2+) contacts are provided by Asp-146, Asn-148, Asp-150, Tyr-152, Glu-157, Asp-194, Asn-196, Asp-198, and Glu-205. The interaction with KCND2 stretch occupies residues 214 to 227 (DNIMRSLQLFQNVM).

It belongs to the recoverin family. In terms of assembly, component of heteromultimeric potassium channels. Identified in potassium channel complexes containing KCND1, KCND2, KCND3, KCNIP1, KCNIP2, KCNIP3, KCNIP4, DPP6 and DPP10. Part of a heterooctamer composed of the tetrameric channel and four KCNIP1 chains. Probably part of a complex consisting of KCNIP1, KCNIP2 isoform 3 and KCND2. Self-associates to form homodimers and homotetramers. Interacts with KCNIP2 isoform 3 in a calcium-dependent manner. Interacts with KCND2; this interaction mediates the capture of both the N- and C-terminus of KCND2, thus preventing KCND2 N-type inactivation and modulates the channel gating kinetics. Interacts with KCND3; each KCNIP1 monomer interacts with two adjacent KCND3 subunits, through both the N-terminal inactivation ball of a KCND3 subunit and a C-terminal helix from the adjacent KCND3 subunit, clamping them together; this interaction stabilizes the tetrameric form and modulates the channel gating kinetics namely channel activation and inactivation kinetics and rate of recovery from inactivation. As to expression, expressed in brain. Found in a subpopulation of neurons widely distributed and enriched in Purkinje cells of the cerebellum and in the reticular thalamic and medial habenular nuclei.

The protein localises to the cell membrane. Its subcellular location is the cytoplasm. It is found in the cell projection. The protein resides in the dendrite. Its function is as follows. Regulatory subunit of Kv4/D (Shal)-type voltage-gated rapidly inactivating A-type potassium channels. Regulates channel density, inactivation kinetics and rate of recovery from inactivation in a calcium-dependent and isoform-specific manner. Modulates KCND2/Kv4.2 currents. In vitro, modulates KCND1/Kv4.1 currents. Increases the presence of KCND2 at the cell surface. The polypeptide is A-type potassium channel modulatory protein KCNIP1 (Mus musculus (Mouse)).